The following is a 927-amino-acid chain: MPANGNSHAYFNIDEVRSKNVLKQITQLINEVTNITETFPLKPGQTTEGLVATLDAAVANFLQTGSFAISKCPIANSDPRAIDLLHEALGAVQDTGQVMIQTGRDFVRDSTSTNKRAIATNSGRNLLTAVAKFLILADSIDVKVIVDKVDEVRETAHQMIEADTKIKVDDLYNLLISQIEELDITVRRRAIDLVKPNQRDDLLAARSALRQTAPLLYTSTRTFVRHPEHEEARRNRDYTADEMHSALNALESVLNGQQPKVTFSEYGRIGDLINEIDTFQNRIEIDPAHYRRGTDRPDLEGHCERIVSGSASIADAESTRENRKQKIVAECNNLRQALQELLTEYEKSTGRRDDNDDIPLGIAEVHKRTKDLRRHLRRAIVDHISDAFLDTRTPLILLIEAAKEGHEENTRYRSKMFQEHANEIVSVARLSCQLSSDVESVSVIQHTAAQLEKLAPQVAQAAILLCHQPTSKTAQENMETYKNAWFDKVRLLTTALDNITTLDDFLAVSEAHIVEDCERGIKGITANASTPDENAANCETVDCAAGSIRGRALRVCDVVDAEMDFLQNSEYTETVKQAVRILKTQRVDQFAERASALANRQEAHGLTWDPKTKEEEMNEFINACTLVHDAVKDIRHALLMNRSMNDVDSDVEYEADGVGAANADANRTISEQENQQNLMRRLPEEEKKKIQAQIDIFKVTQTRFEREVAKWDETGNDIISLANNMCKIMMSMTEFTRGCGPLKTTMDVIRAAQEISLNGSKLNALARQIGEESADSQTKKDLLAYLSQITLYCQQLNICSKVKADVTQVGNELVVSALDSAMSLIQTARNLLTAVVQTVKAAYIASTKFRRPNANSVRVEWRMAPPKKQPLIRPQKNNAIIRRASERRPLQPAKVLAEFTRNEIETGRDSDDEELDRRHQQRINGRL.

Coiled coils occupy residues 319–354 (TRENRKQKIVAECNNLRQALQELLTEYEKSTGRRDD) and 672–696 (QENQQNLMRRLPEEEKKKIQAQIDI). Residues 901–927 (RNEIETGRDSDDEELDRRHQQRINGRL) are disordered.

The protein belongs to the vinculin/alpha-catenin family. As to quaternary structure, component of a core catenin-cadherin complex consisting of hmr-1, hmp-1 and hmp-2; the complex localizes to adherens junctions. May interact with hmp-2. In terms of tissue distribution, epidermal cells.

It is found in the cell junction. The protein resides in the adherens junction. Its subcellular location is the cytoplasm. Its function is as follows. Required for cell migration during body enclosure and cell shape changes during body elongation. Required for proper localization of other junctional components, such as pac-1. This Caenorhabditis elegans protein is Alpha-catenin-like protein hmp-1 (hmp-1).